The chain runs to 283 residues: Glutamate racemase (283 aa).

Residues 28 to 29 (DS) and 60 to 61 (YG) each bind substrate. Catalysis depends on cysteine 92, which acts as the Proton donor/acceptor. 93-94 (NT) serves as a coordination point for substrate. The active-site Proton donor/acceptor is cysteine 204. 205–206 (TH) is a substrate binding site.

The protein belongs to the aspartate/glutamate racemases family.

It catalyses the reaction L-glutamate = D-glutamate. Its pathway is cell wall biogenesis; peptidoglycan biosynthesis. In terms of biological role, provides the (R)-glutamate required for cell wall biosynthesis. In Klebsiella pneumoniae (strain 342), this protein is Glutamate racemase.